The primary structure comprises 510 residues: 2,3-bisphosphoglycerate-independent phosphoglycerate mutase (510 aa).

Asp12 is a Mn(2+) binding site. Tyr36 is modified (phosphotyrosine). Ser62 lines the Mn(2+) pocket. The Phosphoserine intermediate role is filled by Ser62. Substrate is bound by residues His123, 153-154 (RD), Arg185, Arg191, 261-264 (RPDR), and Lys336. Asp403, His407, Asp444, His445, and His462 together coordinate Mn(2+).

The protein belongs to the BPG-independent phosphoglycerate mutase family. As to quaternary structure, monomer. Mn(2+) serves as cofactor.

It catalyses the reaction (2R)-2-phosphoglycerate = (2R)-3-phosphoglycerate. It participates in carbohydrate degradation; glycolysis; pyruvate from D-glyceraldehyde 3-phosphate: step 3/5. Functionally, essential for rapid growth and for sporulation. Catalyzes the interconversion of 2-phosphoglycerate and 3-phosphoglycerate. In Shouchella clausii (strain KSM-K16) (Alkalihalobacillus clausii), this protein is 2,3-bisphosphoglycerate-independent phosphoglycerate mutase.